Consider the following 111-residue polypeptide: Large ribosomal subunit protein uL22 (111 aa).

This sequence belongs to the universal ribosomal protein uL22 family. As to quaternary structure, part of the 50S ribosomal subunit.

In terms of biological role, this protein binds specifically to 23S rRNA; its binding is stimulated by other ribosomal proteins, e.g. L4, L17, and L20. It is important during the early stages of 50S assembly. It makes multiple contacts with different domains of the 23S rRNA in the assembled 50S subunit and ribosome. Its function is as follows. The globular domain of the protein is located near the polypeptide exit tunnel on the outside of the subunit, while an extended beta-hairpin is found that lines the wall of the exit tunnel in the center of the 70S ribosome. The protein is Large ribosomal subunit protein uL22 of Protochlamydia amoebophila (strain UWE25).